Here is a 249-residue protein sequence, read N- to C-terminus: DNA repair protein RecO (249 aa).

This sequence belongs to the RecO family.

Functionally, involved in DNA repair and RecF pathway recombination. The chain is DNA repair protein RecO from Sinorhizobium medicae (strain WSM419) (Ensifer medicae).